We begin with the raw amino-acid sequence, 240 residues long: L-isoleucine-4-hydroxylase (240 aa).

The Fe cation site is built by H159, D161, and H212.

This sequence belongs to the iron/ascorbate-dependent oxidoreductase family. L-ascorbate is required as a cofactor. It depends on Fe(2+) as a cofactor.

It catalyses the reaction L-isoleucine + 2-oxoglutarate + O2 = (4S)-4-hydroxy-L-isoleucine + succinate + CO2. Its function is as follows. Catalyzes the hydroxylation of L-isoleucine to produce (4S)-4-hydroxy-L-isoleucine. Can also catalyze the hydroxylation of L-leucine, L-norvaline, L-norleucine and L-allo-isoleucine, as well as the sulfoxidation of L-methionine, L-ethionine, S-methyl-L-cysteine, S-ethyl-L-cysteine, and S-allyl-L-cysteine. The polypeptide is L-isoleucine-4-hydroxylase (Bacillus thuringiensis).